The sequence spans 399 residues: Elongation factor Tu (399 aa).

Residues 10-209 (KPHVNIGTIG…DVDEYIPTPV (200 aa)) enclose the tr-type G domain. Residues 19–26 (GHVDHGKT) form a G1 region. 19–26 (GHVDHGKT) is a GTP binding site. Mg(2+) is bound at residue Thr-26. A G2 region spans residues 62 to 66 (GITIN). The interval 83–86 (DCPG) is G3. GTP is bound by residues 83–87 (DCPGH) and 138–141 (NKCD). The segment at 138-141 (NKCD) is G4. The segment at 175–177 (SAY) is G5.

Belongs to the TRAFAC class translation factor GTPase superfamily. Classic translation factor GTPase family. EF-Tu/EF-1A subfamily. Monomer.

Its subcellular location is the cytoplasm. It carries out the reaction GTP + H2O = GDP + phosphate + H(+). In terms of biological role, GTP hydrolase that promotes the GTP-dependent binding of aminoacyl-tRNA to the A-site of ribosomes during protein biosynthesis. This is Elongation factor Tu from Bifidobacterium animalis subsp. lactis (strain AD011).